Here is a 110-residue protein sequence, read N- to C-terminus: Iron-sulfur cluster assembly protein CyaY (110 aa).

This sequence belongs to the frataxin family.

Its function is as follows. Involved in iron-sulfur (Fe-S) cluster assembly. May act as a regulator of Fe-S biogenesis. The protein is Iron-sulfur cluster assembly protein CyaY of Pseudomonas putida (strain W619).